Here is a 51-residue protein sequence, read N- to C-terminus: Large ribosomal subunit protein eL40 (51 aa).

Belongs to the eukaryotic ribosomal protein eL40 family.

The protein is Large ribosomal subunit protein eL40 of Thermococcus gammatolerans (strain DSM 15229 / JCM 11827 / EJ3).